The sequence spans 80 residues: Delta-actitoxin-Amc2a (80 aa).

The signal sequence occupies residues 1–19; that stretch reads MNKVLFLCLVVLCATSAFA. A propeptide spanning residues 20-30 is cleaved from the precursor; it reads AEEEYVERAPV. Intrachain disulfides connect C37–C73, C39–C65, and C55–C74. Hydroxyproline is present on P56.

It belongs to the sea anemone type 3 (BDS) potassium channel toxin family.

It localises to the secreted. Its subcellular location is the nematocyst. Its function is as follows. Neurotoxon that induces paralysis when injected into crabs. This Antheopsis maculata (Sea anemone) protein is Delta-actitoxin-Amc2a.